The sequence spans 411 residues: RNA binding protein fox-1 homolog 2 (411 aa).

A disordered region spans residues 16 to 175 (TRGTKRESDQ…SETKASPKRL (160 aa)). Composition is skewed to polar residues over residues 58–83 (PVSQAYQGFAPLNSQGNQEPTATPDT) and 99–119 (NGLSTDYGSQHTQDYATQSTE). The span at 135–165 (SAPATSTANASSTTDGSQTEGQQSQSQNNEN) shows a compositional bias: low complexity. Residues 173 to 249 (KRLHVSNIPF…RKIEVNNATA (77 aa)) enclose the RRM domain.

Interacts with papd4/gld2.

It is found in the nucleus. The protein localises to the cytoplasm. In terms of biological role, RNA-binding protein that regulates alternative splicing events by binding to 5'-UGCAUGU-3' elements. Regulates alternative splicing of tissue-specific exons. The sequence is that of RNA binding protein fox-1 homolog 2 (rbfox2) from Xenopus laevis (African clawed frog).